Here is a 116-residue protein sequence, read N- to C-terminus: MTRVKRGYVARKRRKKVLSLTKGFRGSSSVLFRSANQRNMKALKYAYRDRRKMKREFRKLWITRINAATRMSNMTYSTFIHKLKKANIVLNRKLLAQLAVRDQQVFQQLFSYIEGV.

The protein belongs to the bacterial ribosomal protein bL20 family.

The protein localises to the plastid. It localises to the chloroplast. Binds directly to 23S ribosomal RNA and is necessary for the in vitro assembly process of the 50S ribosomal subunit. It is not involved in the protein synthesizing functions of that subunit. This is Large ribosomal subunit protein bL20c from Oltmannsiellopsis viridis (Marine flagellate).